We begin with the raw amino-acid sequence, 462 residues long: ATP synthase subunit beta 1 (462 aa).

Position 151–158 (glycine 151–threonine 158) interacts with ATP.

It belongs to the ATPase alpha/beta chains family. F-type ATPases have 2 components, CF(1) - the catalytic core - and CF(0) - the membrane proton channel. CF(1) has five subunits: alpha(3), beta(3), gamma(1), delta(1), epsilon(1). CF(0) has four main subunits: a(1), b(1), b'(1) and c(9-12).

The protein resides in the cell inner membrane. It carries out the reaction ATP + H2O + 4 H(+)(in) = ADP + phosphate + 5 H(+)(out). Functionally, produces ATP from ADP in the presence of a proton gradient across the membrane. The catalytic sites are hosted primarily by the beta subunits. The protein is ATP synthase subunit beta 1 of Chlorobium luteolum (strain DSM 273 / BCRC 81028 / 2530) (Pelodictyon luteolum).